The chain runs to 211 residues: FMN-dependent NADH:quinone oxidoreductase (211 aa).

FMN is bound at residue 17 to 19; it reads SYS.

This sequence belongs to the azoreductase type 1 family. As to quaternary structure, homodimer. FMN serves as cofactor.

The enzyme catalyses 2 a quinone + NADH + H(+) = 2 a 1,4-benzosemiquinone + NAD(+). The catalysed reaction is N,N-dimethyl-1,4-phenylenediamine + anthranilate + 2 NAD(+) = 2-(4-dimethylaminophenyl)diazenylbenzoate + 2 NADH + 2 H(+). Quinone reductase that provides resistance to thiol-specific stress caused by electrophilic quinones. Its function is as follows. Also exhibits azoreductase activity. Catalyzes the reductive cleavage of the azo bond in aromatic azo compounds to the corresponding amines. The polypeptide is FMN-dependent NADH:quinone oxidoreductase (Bacillus pumilus (strain SAFR-032)).